The primary structure comprises 391 residues: Putative gustatory receptor 36a (391 aa).

Topologically, residues 1–3 are cytoplasmic; it reads MFD. Residues 4–24 traverse the membrane as a helical segment; sequence WVGLLLKVLYYYGQIIGLINF. Residues 25 to 38 are Extracellular-facing; sequence EIDWQRGRVVAAQR. A helical membrane pass occupies residues 39–59; that stretch reads GILFAIAINVLICMVLLLQIS. Residues 60–73 lie on the Cytoplasmic side of the membrane; it reads KKFNLDVYFGRANQ. The chain crosses the membrane as a helical span at residues 74-94; it reads LHQYVIIVMVSLRMASGISAI. Topologically, residues 95–126 are extracellular; that stretch reads LNRWRQRAQLMRLVECVLRLFLKKPHVKQMSR. A helical transmembrane segment spans residues 127–147; sequence WAILVKFSVGVVSNFLQMAIS. Residues 148–165 are Cytoplasmic-facing; that stretch reads MESLDRLGFNEFVGMASD. The chain crosses the membrane as a helical span at residues 166–186; sequence FWMSAIINMAISQHYLVILFV. Residues 187-247 are Extracellular-facing; the sequence is RAYYHLLKTE…LQSIVTQLNQ (61 aa). The helical transmembrane segment at 248–268 threads the bilayer; sequence VFGIQGIMVYGGYYIFSVATT. Over 269 to 290 the chain is Cytoplasmic; sequence YITYSLAINGIEELHLSVRAAA. The chain crosses the membrane as a helical span at residues 291-311; sequence LVFSWFLFYYTSAILNLFVML. At 312–391 the chain is on the extracellular side; sequence KLFDDHKEME…FLIQYDMEYF (80 aa).

The protein belongs to the insect chemoreceptor superfamily. Gustatory receptor (GR) family. Gr22e subfamily.

Its subcellular location is the cell membrane. Probable gustatory receptor which mediates acceptance or avoidance behavior, depending on its substrates. This is Putative gustatory receptor 36a (Gr36a) from Drosophila melanogaster (Fruit fly).